A 260-amino-acid polypeptide reads, in one-letter code: Uroplakin-1b (260 aa).

Residues 2–15 are Cytoplasmic-facing; sequence AKDDSTVRCFQGLL. Residues 16 to 36 traverse the membrane as a helical segment; that stretch reads IFGNVIIGMCSIALMAECIFF. Residues 37 to 60 lie on the Extracellular side of the membrane; the sequence is VSDQNSLYPLLEATNNDDIYAAAW. The chain crosses the membrane as a helical span at residues 61–81; sequence IGMFVGICLFCLSVLGIVGIM. The Cytoplasmic segment spans residues 82–86; that stretch reads KSNRK. A helical membrane pass occupies residues 87–107; it reads ILLVYFILMFIVYAFEVASCI. Topologically, residues 108–229 are extracellular; that stretch reads TAATQRDFFT…ELISGPMNRH (122 aa). A helical membrane pass occupies residues 230-250; it reads AWGVAWFGFAILCWTFWVLLG. Residues 251–260 are Cytoplasmic-facing; that stretch reads TMFYWSRIDY.

This sequence belongs to the tetraspanin (TM4SF) family. As to quaternary structure, heterodimer with uroplakin-3A (UPK3A) or uroplakin-3B (UPK3B). In terms of processing, N-glycosylated with high-mannose oligosaccharides. As to expression, bladder epithelium.

The protein resides in the membrane. Functionally, component of the asymmetric unit membrane (AUM); a highly specialized biomembrane elaborated by terminally differentiated urothelial cells. May play an important role in normal bladder epithelial physiology, possibly in regulating membrane permeability of superficial umbrella cells or in stabilizing the apical membrane through AUM/cytoskeletal interactions. The sequence is that of Uroplakin-1b (UPK1B) from Bos taurus (Bovine).